Here is a 315-residue protein sequence, read N- to C-terminus: MSLLEAIAELHVIPYTDVLAWVVMAAFIAGVAADYRDNLLAARRLTAGAWWLFAVFWFVLIQHFAFVHRSVVQTVLILIAVPACLYVGWLVFAGRDSLLTLSRAVAFMTVIYLPFETSELARGLLIEAVAFQTATVIDALSLADGMEYMQDPDEGSTLMNTFWFPETGRASRVVFECTGIGAMSIFGGLIAAVNAPLRRKAVGIALSISIIWVLNIGRNVFIALANGYQWFAYSWLEGPIMALFGLTDPARVSFFVADRVLAQLLAVVALAGLAWFIARWVPELLDIAEELLSIVGIDVELHHPSVDRTDTDPAD.

7 helical membrane-spanning segments follow: residues 12 to 32 (VIPYTDVLAWVVMAAFIAGVA), 47 to 67 (AGAWWLFAVFWFVLIQHFAFV), 74 to 94 (TVLILIAVPACLYVGWLVFAG), 173 to 193 (VVFECTGIGAMSIFGGLIAAV), 204 to 224 (IALSISIIWVLNIGRNVFIAL), 227 to 247 (GYQWFAYSWLEGPIMALFGLT), and 260 to 280 (VLAQLLAVVALAGLAWFIARW). Catalysis depends on Cys177, which acts as the Acyl-thioester intermediate. Arg218 acts as the Proton donor in catalysis.

Belongs to the exosortase/archaeosortase family. Archaeosortase A subfamily.

The protein localises to the cell membrane. Functionally, transpeptidase that recognizes and modifies its substrate by proteolytic cleavage of a sorting signal. Following cleavage, a covalent intermediate is formed via a thioester bond between the archaeosortase and its substrate, which is then transferred and covalently attached to the cell membrane. In Natronomonas pharaonis (strain ATCC 35678 / DSM 2160 / CIP 103997 / JCM 8858 / NBRC 14720 / NCIMB 2260 / Gabara) (Halobacterium pharaonis), this protein is Archaeosortase A.